Consider the following 274-residue polypeptide: Undecaprenyl-diphosphatase 1 (274 aa).

Helical transmembrane passes span 4 to 24, 45 to 65, 84 to 104, 111 to 131, 146 to 166, 186 to 206, 217 to 237, and 249 to 269; these read LLLL…FLPI, SAVF…YEYW, HLAI…LSFG, LFND…IMWI, IGLK…IPGT, ATEF…LLDL, FDWS…LLLI, and FMVF…FAYT.

This sequence belongs to the UppP family.

Its subcellular location is the cell inner membrane. It catalyses the reaction di-trans,octa-cis-undecaprenyl diphosphate + H2O = di-trans,octa-cis-undecaprenyl phosphate + phosphate + H(+). Functionally, catalyzes the dephosphorylation of undecaprenyl diphosphate (UPP). Confers resistance to bacitracin. The chain is Undecaprenyl-diphosphatase 1 from Acinetobacter baylyi (strain ATCC 33305 / BD413 / ADP1).